The chain runs to 475 residues: UDP-N-acetylmuramate--L-alanine ligase (475 aa).

112–118 is an ATP binding site; the sequence is GTHGKTT.

It belongs to the MurCDEF family.

Its subcellular location is the cytoplasm. The enzyme catalyses UDP-N-acetyl-alpha-D-muramate + L-alanine + ATP = UDP-N-acetyl-alpha-D-muramoyl-L-alanine + ADP + phosphate + H(+). It participates in cell wall biogenesis; peptidoglycan biosynthesis. Its function is as follows. Cell wall formation. The sequence is that of UDP-N-acetylmuramate--L-alanine ligase from Paracidovorax citrulli (strain AAC00-1) (Acidovorax citrulli).